The following is a 69-amino-acid chain: Cytochrome c oxidase subunit 8A, mitochondrial (69 aa).

The transit peptide at 1–25 (MSVLTPLLLRGLTGSARRLPVPCAR) directs the protein to the mitochondrion. An SIFI-degron motif is present at residues 2 to 19 (SVLTPLLLRGLTGSARRL). The Mitochondrial matrix portion of the chain corresponds to 26-36 (VHSKPPREQLG). A helical membrane pass occupies residues 37 to 60 (TMDIAIGLTSCFVCFLLPSGWVLS). Residues 61–69 (HLENYKKRE) are Mitochondrial intermembrane-facing.

The protein belongs to the cytochrome c oxidase VIII family. In terms of assembly, component of the cytochrome c oxidase (complex IV, CIV), a multisubunit enzyme composed of 14 subunits. The complex is composed of a catalytic core of 3 subunits MT-CO1, MT-CO2 and MT-CO3, encoded in the mitochondrial DNA, and 11 supernumerary subunits COX4I, COX5A, COX5B, COX6A, COX6B, COX6C, COX7A, COX7B, COX7C, COX8 and NDUFA4, which are encoded in the nuclear genome. The complex exists as a monomer or a dimer and forms supercomplexes (SCs) in the inner mitochondrial membrane with NADH-ubiquinone oxidoreductase (complex I, CI) and ubiquinol-cytochrome c oxidoreductase (cytochrome b-c1 complex, complex III, CIII), resulting in different assemblies (supercomplex SCI(1)III(2)IV(1) and megacomplex MCI(2)III(2)IV(2)). In terms of processing, in response to mitochondrial stress, the precursor protein is ubiquitinated by the SIFI complex in the cytoplasm before mitochondrial import, leading to its degradation. Within the SIFI complex, UBR4 initiates ubiquitin chain that are further elongated or branched by KCMF1.

The protein resides in the mitochondrion inner membrane. The protein operates within energy metabolism; oxidative phosphorylation. Its function is as follows. Component of the cytochrome c oxidase, the last enzyme in the mitochondrial electron transport chain which drives oxidative phosphorylation. The respiratory chain contains 3 multisubunit complexes succinate dehydrogenase (complex II, CII), ubiquinol-cytochrome c oxidoreductase (cytochrome b-c1 complex, complex III, CIII) and cytochrome c oxidase (complex IV, CIV), that cooperate to transfer electrons derived from NADH and succinate to molecular oxygen, creating an electrochemical gradient over the inner membrane that drives transmembrane transport and the ATP synthase. Cytochrome c oxidase is the component of the respiratory chain that catalyzes the reduction of oxygen to water. Electrons originating from reduced cytochrome c in the intermembrane space (IMS) are transferred via the dinuclear copper A center (CU(A)) of subunit 2 and heme A of subunit 1 to the active site in subunit 1, a binuclear center (BNC) formed by heme A3 and copper B (CU(B)). The BNC reduces molecular oxygen to 2 water molecules using 4 electrons from cytochrome c in the IMS and 4 protons from the mitochondrial matrix. The sequence is that of Cytochrome c oxidase subunit 8A, mitochondrial (COX8A) from Otolemur crassicaudatus (Brown greater galago).